The primary structure comprises 357 residues: Dual-specificity RNA methyltransferase RlmN (357 aa).

Catalysis depends on E89, which acts as the Proton acceptor. One can recognise a Radical SAM core domain in the interval 109-340 (EGEKYTVCVS…CTIRESKALD (232 aa)). Residues C116 and C345 are joined by a disulfide bond. 3 residues coordinate [4Fe-4S] cluster: C123, C127, and C130. Residues 173 to 174 (GE), S203, 226 to 228 (SLH), and N302 each bind S-adenosyl-L-methionine. Residue C345 is the S-methylcysteine intermediate of the active site.

It belongs to the radical SAM superfamily. RlmN family. The cofactor is [4Fe-4S] cluster.

Its subcellular location is the cytoplasm. The catalysed reaction is adenosine(2503) in 23S rRNA + 2 reduced [2Fe-2S]-[ferredoxin] + 2 S-adenosyl-L-methionine = 2-methyladenosine(2503) in 23S rRNA + 5'-deoxyadenosine + L-methionine + 2 oxidized [2Fe-2S]-[ferredoxin] + S-adenosyl-L-homocysteine. It carries out the reaction adenosine(37) in tRNA + 2 reduced [2Fe-2S]-[ferredoxin] + 2 S-adenosyl-L-methionine = 2-methyladenosine(37) in tRNA + 5'-deoxyadenosine + L-methionine + 2 oxidized [2Fe-2S]-[ferredoxin] + S-adenosyl-L-homocysteine. Its function is as follows. Specifically methylates position 2 of adenine 2503 in 23S rRNA and position 2 of adenine 37 in tRNAs. m2A2503 modification seems to play a crucial role in the proofreading step occurring at the peptidyl transferase center and thus would serve to optimize ribosomal fidelity. In Helicobacter pylori (strain HPAG1), this protein is Dual-specificity RNA methyltransferase RlmN.